A 166-amino-acid polypeptide reads, in one-letter code: NAD(P)H-quinone oxidoreductase subunit I, chloroplastic (166 aa).

4Fe-4S ferredoxin-type domains follow at residues 55-84 (GRIH…VDWK) and 95-124 (LNYS…MTEE). [4Fe-4S] cluster contacts are provided by cysteine 64, cysteine 67, cysteine 70, cysteine 74, cysteine 104, cysteine 107, cysteine 110, and cysteine 114.

This sequence belongs to the complex I 23 kDa subunit family. In terms of assembly, NDH is composed of at least 16 different subunits, 5 of which are encoded in the nucleus. Requires [4Fe-4S] cluster as cofactor.

The protein resides in the plastid. Its subcellular location is the chloroplast thylakoid membrane. The catalysed reaction is a plastoquinone + NADH + (n+1) H(+)(in) = a plastoquinol + NAD(+) + n H(+)(out). The enzyme catalyses a plastoquinone + NADPH + (n+1) H(+)(in) = a plastoquinol + NADP(+) + n H(+)(out). Its function is as follows. NDH shuttles electrons from NAD(P)H:plastoquinone, via FMN and iron-sulfur (Fe-S) centers, to quinones in the photosynthetic chain and possibly in a chloroplast respiratory chain. The immediate electron acceptor for the enzyme in this species is believed to be plastoquinone. Couples the redox reaction to proton translocation, and thus conserves the redox energy in a proton gradient. The protein is NAD(P)H-quinone oxidoreductase subunit I, chloroplastic of Laphamia lindheimeri (Lindheimer's rockdaisy).